Consider the following 200-residue polypeptide: Ephrin-A2 (200 aa).

The N-terminal stretch at 1–22 (MPRWEAAALLAAIVGVCVWSDD) is a signal peptide. Residues 28–161 (SDRYAVYWNR…KLKVYVRPTN (134 aa)) enclose the Ephrin RBD domain. Residue Asn-36 is glycosylated (N-linked (GlcNAc...) asparagine). Intrachain disulfides connect Cys-61/Cys-101 and Cys-89/Cys-150. Residues Asn-161 and Asn-175 are each glycosylated (N-linked (GlcNAc...) asparagine). Asn-175 is lipidated: GPI-anchor amidated asparagine. The propeptide at 176-200 (NSCCSLAVPRAVLVAAPVFWTLLGS) is removed in mature form.

Belongs to the ephrin family. As to quaternary structure, binds to the receptor tyrosine kinases EPHA3, EPHA4 and EPHA5. Interacts with EPHA8; activates EPHA8. Expressed in a gradient across the tectum being more strongly expressed at the posterior pole.

The protein resides in the cell membrane. In terms of biological role, cell surface GPI-bound ligand for Eph receptors, a family of receptor tyrosine kinases which are crucial for migration, repulsion and adhesion during neuronal, vascular and epithelial development. Binds promiscuously Eph receptors residing on adjacent cells, leading to contact-dependent bidirectional signaling into neighboring cells. The signaling pathway downstream of the receptor is referred to as forward signaling while the signaling pathway downstream of the ephrin ligand is referred to as reverse signaling. With the EPHA2 receptor may play a role in bone remodeling through regulation of osteoclastogenesis and osteoblastogenesis. The sequence is that of Ephrin-A2 (EFNA2) from Gallus gallus (Chicken).